A 63-amino-acid chain; its full sequence is Large ribosomal subunit protein bL32 (63 aa).

The interval 1–27 (MANPKAKMSKSRRDKRRAQFNARTKPV) is disordered. Residues 7–18 (KMSKSRRDKRRA) show a composition bias toward basic residues.

The protein belongs to the bacterial ribosomal protein bL32 family.

This chain is Large ribosomal subunit protein bL32, found in Chlorobium phaeobacteroides (strain DSM 266 / SMG 266 / 2430).